A 185-amino-acid polypeptide reads, in one-letter code: Ribosome-recycling factor (185 aa).

This sequence belongs to the RRF family.

It localises to the cytoplasm. Responsible for the release of ribosomes from messenger RNA at the termination of protein biosynthesis. May increase the efficiency of translation by recycling ribosomes from one round of translation to another. In Wolbachia sp. subsp. Drosophila simulans (strain wRi), this protein is Ribosome-recycling factor.